A 63-amino-acid chain; its full sequence is Probable rubredoxin (63 aa).

A Rubredoxin-like domain is found at methionine 11–leucine 62. Positions 16, 19, 49, and 52 each coordinate Fe cation.

It belongs to the rubredoxin family. The cofactor is Fe(3+).

Rubredoxin is a small nonheme, iron protein lacking acid-labile sulfide. Its single Fe, chelated to 4 Cys, functions as an electron acceptor and may also stabilize the conformation of the molecule. This chain is Probable rubredoxin, found in Methanothermobacter thermautotrophicus (strain ATCC 29096 / DSM 1053 / JCM 10044 / NBRC 100330 / Delta H) (Methanobacterium thermoautotrophicum).